The chain runs to 647 residues: MEPAAGFLSPRPFPRAAAPSSPPAGPGPPASASPRSEPGVLAGPQTPDASRLITDPRSGRTYIKGRLLGKGGFARCYEATDTETSIAYAVKVIPQSRVAKPHQREKIINEIELHRDLQHRHIVRFSHHFEDADNIYIFLELCSRKSLAHIWKARHTLLEPEVRYYLRQILSGLKYLHQRGILHRDLKLGNFFITDNMELKVGDFGLAARLEPPEQRKKTICGTPNYVAPEVLLRQGHGPEADVWSLGCVMYTLLCGSPPFETADLKETYRCIKQVHYTLPASLSLPARQLLAAILRASPRDRPSIEQILRHDFFTKGYTPDRLPVSSCVTVPDLTPPNPARSLFAKVTKSLFGRRKSKNKNHSEEQDNVSCLVSGLMRTSIGHPDVRPEAPAASALAPVSLVETAAEDSSPRGTLASSGDGFEEGLTVTTVVESALCALRNCVAFMPPAEQNPAPLAQPEPLVWVSKWVDYSNKFGFGYQLSSRRVAVLFNDGTHMALSANRKTVHYNPTSTKHFSFSVGSVPRALQPQLGILRYFASYMEQHLMKGGDLPSVEEVEVPAPPLLLQWVKTDQALLMLFSDGTVQVNFYGDHTKLILSGWEPLLVTFVARNRSACTYLASHLRQLGCSPDLRQRLRYALRLLRDRSPA.

Positions 1-56 (MEPAAGFLSPRPFPRAAAPSSPPAGPGPPASASPRSEPGVLAGPQTPDASRLITDP) are disordered. Positions 20–31 (SSPPAGPGPPAS) are enriched in pro residues. A Protein kinase domain is found at 62 to 314 (YIKGRLLGKG…IEQILRHDFF (253 aa)). Residues 68–76 (LGKGGFARC) and Lys91 contribute to the ATP site. Asp185 acts as the Proton acceptor in catalysis. 2 POLO box domains span residues 464–542 (WVSK…YMEQ) and 563–646 (LLLQ…DRSP).

It belongs to the protein kinase superfamily. Ser/Thr protein kinase family. CDC5/Polo subfamily. In terms of assembly, interacts with GOLGB1. Interacts (via the POLO-box domain) with CIB1; leading to inhibit PLK3 kinase activity. Post-translationally, phosphorylated in an ATM-dependent manner following DNA damage. Phosphorylated as cells enter mitosis and dephosphorylated as cells exit mitosis. As to expression, constitutively expressed in post-mitotic neurons.

The protein localises to the cell projection. It localises to the dendrite. The protein resides in the cytoplasm. Its subcellular location is the nucleus. It is found in the nucleolus. The protein localises to the golgi apparatus. It localises to the cytoskeleton. The protein resides in the microtubule organizing center. Its subcellular location is the centrosome. The catalysed reaction is L-seryl-[protein] + ATP = O-phospho-L-seryl-[protein] + ADP + H(+). The enzyme catalyses L-threonyl-[protein] + ATP = O-phospho-L-threonyl-[protein] + ADP + H(+). Its function is as follows. Serine/threonine-protein kinase involved in cell cycle regulation, response to stress and Golgi disassembly. Polo-like kinases act by binding and phosphorylating proteins that are already phosphorylated on a specific motif recognized by the POLO box domains. Phosphorylates ATF2, BCL2L1, CDC25A, CDC25C, CHEK2, HIF1A, JUN, p53/TP53, p73/TP73, PTEN, TOP2A and VRK1. Involved in cell cycle regulation: required for entry into S phase and cytokinesis. Phosphorylates BCL2L1, leading to regulate the G2 checkpoint and progression to cytokinesis during mitosis. Plays a key role in response to stress: rapidly activated upon stress stimulation, such as ionizing radiation, reactive oxygen species (ROS), hyperosmotic stress, UV irradiation and hypoxia. Involved in DNA damage response and G1/S transition checkpoint by phosphorylating CDC25A, p53/TP53 and p73/TP73. Phosphorylates p53/TP53 in response to reactive oxygen species (ROS), thereby promoting p53/TP53-mediated apoptosis. Phosphorylates CHEK2 in response to DNA damage, promoting the G2/M transition checkpoint. Phosphorylates the transcription factor p73/TP73 in response to DNA damage, leading to inhibit p73/TP73-mediated transcriptional activation and pro-apoptotic functions. Phosphorylates HIF1A and JUN is response to hypoxia. Phosphorylates ATF2 following hyperosmotic stress in corneal epithelium. Also involved in Golgi disassembly during the cell cycle: part of a MEK1/MAP2K1-dependent pathway that induces Golgi fragmentation during mitosis by mediating phosphorylation of VRK1. May participate in endomitotic cell cycle, a form of mitosis in which both karyokinesis and cytokinesis are interrupted and is a hallmark of megakaryocyte differentiation, via its interaction with CIB1. This chain is Serine/threonine-protein kinase PLK3 (Plk3), found in Rattus norvegicus (Rat).